The sequence spans 211 residues: Transcriptional regulatory protein RcsA (211 aa).

The region spanning 135–200 (SEVHPFTLSQ…VIYHVVRLTD (66 aa)) is the HTH luxR-type domain. The segment at residues 159 to 178 (TIQISDKMQIKAKTVSSHKG) is a DNA-binding region (H-T-H motif).

Belongs to the RcsA family.

In terms of biological role, component of the Rcs signaling system, which controls transcription of numerous genes. Binds to DNA to regulate expression of genes. The sequence is that of Transcriptional regulatory protein RcsA from Erwinia amylovora (Fire blight bacteria).